Consider the following 461-residue polypeptide: Cysteine--tRNA ligase (461 aa).

Cys-28 is a binding site for Zn(2+). The short motif at 30 to 40 is the 'HIGH' region element; the sequence is ITVYDLCHIGH. Zn(2+) is bound by residues Cys-209, His-234, and Glu-238. Residues 266–270 carry the 'KMSKS' region motif; sequence KMSKS. Lys-269 provides a ligand contact to ATP.

The protein belongs to the class-I aminoacyl-tRNA synthetase family. As to quaternary structure, monomer. Requires Zn(2+) as cofactor.

It localises to the cytoplasm. The catalysed reaction is tRNA(Cys) + L-cysteine + ATP = L-cysteinyl-tRNA(Cys) + AMP + diphosphate. In Escherichia fergusonii (strain ATCC 35469 / DSM 13698 / CCUG 18766 / IAM 14443 / JCM 21226 / LMG 7866 / NBRC 102419 / NCTC 12128 / CDC 0568-73), this protein is Cysteine--tRNA ligase.